We begin with the raw amino-acid sequence, 576 residues long: Boron transporter 1 (576 aa).

Topologically, residues 1-84 (MSNESTRVTV…SDWVDAFNYR (84 aa)) are cytoplasmic. The interval 19-48 (ECAQALERTNDELDRESSVSESRSDEESHE) is disordered. Basic and acidic residues predominate over residues 26-48 (RTNDELDRESSVSESRSDEESHE). Residues 85 to 105 (VIPSIVDTYFNNLLPAIAFAQ) traverse the membrane as a helical segment. The Extracellular portion of the chain corresponds to 106 to 116 (DMFDRTDNSYG). The helical transmembrane segment at 117–134 (VNEVLLSSAMAGIVFGVL) threads the bilayer. Over 135-140 (GGQPLC) the chain is Cytoplasmic. The helical transmembrane segment at 141–160 (IVGVTGPISIFNYTVYEIIK) threads the bilayer. Topologically, residues 161-165 (PLNTS) are extracellular. Residues 166–186 (YFGFMFWICMWSMIFHLVLAF) form a helical membrane-spanning segment. Residues 187–192 (TNAVCL) lie on the Cytoplasmic side of the membrane. Residues 193–213 (LQYVTTFPCDIFGLFINVVYI) traverse the membrane as a helical segment. Residues 214 to 235 (QKGIQILTRQFSAKSGEKSVQD) are Extracellular-facing. The helical transmembrane segment at 236-256 (GFASVVVALVMTAFGLFFKLF) threads the bilayer. Over 257–274 (HYYPLFSHRIRTFISDYS) the chain is Cytoplasmic. A helical transmembrane segment spans residues 275–295 (TALSVLFWSSFTHFGGYLHDV). At 296 to 329 (KFKKLPITKAFFPTSKVNRPQNTWLAYEPIPVKD) the chain is on the extracellular side. Residues 330 to 350 (VFIALPFGIFLTILFYFDHNV) form a helical membrane-spanning segment. At 351–373 (SSLMAQRHQYKLKKPSSFHYDFA) the chain is on the cytoplasmic side. Residues 374 to 394 (LLGLTTCISGVLGIPAPNGLI) form a helical membrane-spanning segment. Over 395-438 (PQAPLHTETLLVRDSNQKVISCVEQRFTNTFQGLMILGTMTRPL) the chain is Extracellular. A helical transmembrane segment spans residues 439–459 (LVCLGEIPQAVLSGLFFIMGI). At 460 to 495 (NGLMTNSIIQRLVFLFSDPNRRDNTSPLMKVSKKSM) the chain is on the cytoplasmic side. A helical transmembrane segment spans residues 496–516 (LIFLSFSLTGFAGEFAITNTI). The Extracellular portion of the chain corresponds to 517–518 (AA). Residues 519 to 539 (IGFPLVLLLSVLVSFSFAYIF) traverse the membrane as a helical segment. The Cytoplasmic portion of the chain corresponds to 540–576 (PTEELKILDTNVAQKFTIKNLLLENIRDAKFCDKHED).

The protein belongs to the anion exchanger (TC 2.A.31) family.

The protein resides in the cell membrane. It is found in the vacuole membrane. Its function is as follows. Functions in boric acid/borate export across the plasma membrane, and thereby protects yeast cells from boron toxicity. Involved in the trafficking of proteins to the vacuole. This Saccharomyces cerevisiae (strain ATCC 204508 / S288c) (Baker's yeast) protein is Boron transporter 1 (BOR1).